We begin with the raw amino-acid sequence, 387 residues long: tRNA-specific 2-thiouridylase MnmA (387 aa).

ATP-binding positions include 34-41 (AMSGGVDS) and Met60. Residue Cys127 is the Nucleophile of the active site. Cys127 and Cys223 form a disulfide bridge. Position 151 (Gly151) interacts with ATP. Residues 173–175 (KDQ) form an interaction with tRNA region. Cys223 serves as the catalytic Cysteine persulfide intermediate.

Belongs to the MnmA/TRMU family.

The protein resides in the cytoplasm. The enzyme catalyses S-sulfanyl-L-cysteinyl-[protein] + uridine(34) in tRNA + AH2 + ATP = 2-thiouridine(34) in tRNA + L-cysteinyl-[protein] + A + AMP + diphosphate + H(+). Functionally, catalyzes the 2-thiolation of uridine at the wobble position (U34) of tRNA, leading to the formation of s(2)U34. The sequence is that of tRNA-specific 2-thiouridylase MnmA from Anaplasma marginale (strain St. Maries).